Here is a 434-residue protein sequence, read N- to C-terminus: Zinc finger CCCH domain-containing protein 10 (434 aa).

The disordered stretch occupies residues methionine 1 to serine 37. Residues glycine 12–glycine 35 show a composition bias toward gly residues. 3 consecutive C3H1-type zinc fingers follow at residues alanine 36–methionine 63, lysine 73–lysine 99, and lysine 134–arginine 161. An omega-N-methylarginine mark is found at arginine 185 and arginine 186. Positions proline 196 to proline 207 are enriched in basic and acidic residues. The tract at residues proline 196–proline 217 is disordered. Residues glycine 234–lysine 280 adopt a coiled-coil conformation. Polar residues predominate over residues threonine 314 to glutamate 330. A disordered region spans residues threonine 314–isoleucine 362. Residues alanine 339–leucine 358 show a composition bias toward pro residues.

The protein resides in the nucleus. In terms of biological role, specific regulator of miRNA biogenesis. Binds, via the C3H1-type zinc finger domains, to the binding motif 5'-GCAGCGC-3' on microRNA pri-MIR143 and negatively regulates the processing to mature microRNA. The chain is Zinc finger CCCH domain-containing protein 10 (ZC3H10) from Homo sapiens (Human).